We begin with the raw amino-acid sequence, 438 residues long: Histidine--tRNA ligase (438 aa).

This sequence belongs to the class-II aminoacyl-tRNA synthetase family. As to quaternary structure, homodimer.

The protein localises to the cytoplasm. The enzyme catalyses tRNA(His) + L-histidine + ATP = L-histidyl-tRNA(His) + AMP + diphosphate + H(+). This Blochmanniella pennsylvanica (strain BPEN) protein is Histidine--tRNA ligase.